A 398-amino-acid polypeptide reads, in one-letter code: Riboflavin biosynthesis protein RibBA (398 aa).

The tract at residues 1–199 (MFHPIEEALD…IKDLIQYRYN (199 aa)) is DHBP synthase. D-ribulose 5-phosphate-binding positions include 26–27 (RE), Asp-31, 138–142 (RAGHT), and Glu-162. Mg(2+) is bound at residue Glu-27. His-141 is a binding site for Mg(2+). The segment at 200 to 398 (LTTLVEREVD…MNKLGHLLHF (199 aa)) is GTP cyclohydrolase II. 251–255 (RVHSE) contacts GTP. The Zn(2+) site is built by Cys-256, Cys-267, and Cys-269. Residues Gln-272, 294–296 (EGR), and Thr-316 each bind GTP. Asp-328 (proton acceptor; for GTP cyclohydrolase activity) is an active-site residue. The active-site Nucleophile; for GTP cyclohydrolase activity is the Arg-330. Positions 351 and 356 each coordinate GTP.

This sequence in the N-terminal section; belongs to the DHBP synthase family. The protein in the C-terminal section; belongs to the GTP cyclohydrolase II family. Mg(2+) is required as a cofactor. It depends on Mn(2+) as a cofactor. Zn(2+) serves as cofactor.

It catalyses the reaction D-ribulose 5-phosphate = (2S)-2-hydroxy-3-oxobutyl phosphate + formate + H(+). The catalysed reaction is GTP + 4 H2O = 2,5-diamino-6-hydroxy-4-(5-phosphoribosylamino)-pyrimidine + formate + 2 phosphate + 3 H(+). The protein operates within cofactor biosynthesis; riboflavin biosynthesis; 2-hydroxy-3-oxobutyl phosphate from D-ribulose 5-phosphate: step 1/1. It functions in the pathway cofactor biosynthesis; riboflavin biosynthesis; 5-amino-6-(D-ribitylamino)uracil from GTP: step 1/4. Catalyzes the conversion of D-ribulose 5-phosphate to formate and 3,4-dihydroxy-2-butanone 4-phosphate. Functionally, catalyzes the conversion of GTP to 2,5-diamino-6-ribosylamino-4(3H)-pyrimidinone 5'-phosphate (DARP), formate and pyrophosphate. In Bacillus subtilis (strain 168), this protein is Riboflavin biosynthesis protein RibBA.